A 758-amino-acid chain; its full sequence is 5-methyltetrahydropteroyltriglutamate--homocysteine methyltransferase (758 aa).

5-methyltetrahydropteroyltri-L-glutamate-binding positions include 17–20 and Lys-113; that span reads RELK. L-homocysteine-binding positions include 433–435 and Glu-486; that span reads IGS. L-methionine contacts are provided by residues 433 to 435 and Glu-486; that span reads IGS. 5-methyltetrahydropteroyltri-L-glutamate contacts are provided by residues 517 to 518 and Trp-563; that span reads RC. An L-homocysteine-binding site is contributed by Asp-601. Asp-601 lines the L-methionine pocket. 5-methyltetrahydropteroyltri-L-glutamate is bound at residue Glu-607. His-643, Cys-645, and Glu-667 together coordinate Zn(2+). His-696 (proton donor) is an active-site residue. Position 728 (Cys-728) interacts with Zn(2+).

It belongs to the vitamin-B12 independent methionine synthase family. The cofactor is Zn(2+).

The enzyme catalyses 5-methyltetrahydropteroyltri-L-glutamate + L-homocysteine = tetrahydropteroyltri-L-glutamate + L-methionine. Its pathway is amino-acid biosynthesis; L-methionine biosynthesis via de novo pathway; L-methionine from L-homocysteine (MetE route): step 1/1. Functionally, catalyzes the transfer of a methyl group from 5-methyltetrahydrofolate to homocysteine resulting in methionine formation. The sequence is that of 5-methyltetrahydropteroyltriglutamate--homocysteine methyltransferase from Nitrosomonas europaea (strain ATCC 19718 / CIP 103999 / KCTC 2705 / NBRC 14298).